The chain runs to 445 residues: MTKVITRFAPSPTGMLHVGNIRAALLNWLYAKKHDGQFILRFDDTDLERSKQEYKDAIRADLKFLNLNWDQTFNQLSRLSRYDEIKKLLLDKKRLYACYETPEELELKRKFQLSKGLPPIYDRAALNLTEDQIQKYIEQGRKPHYRFLVNHEPITWHDMIKGEVKYEGKALSDPIVIRADGSMTYMLCSVIDDVDYEITHIIRGEDHVSNTAIQIQMFEALDKYPPTFGHLSLIINKDEKISKRVGGFEIATLREEVGLEAMAIASFFSLLGSSAQIIPHKKMDELVKHFEISSFSKSPTIYQPEDLERLNHKLLISLEFNEVKDRLKEIDAEYIDENFWLSVRPNLKKLFDAKDWWEICHKTPNIQDLNLDKEYLKQAAELLPEEEITTETWGIWTKKLAAITNRKGKELFLPLRLALTGKESGPEISKVLPLIKREEIVKRLT.

The 'HIGH' region motif lies at 10 to 20; the sequence is PSPTGMLHVGN. The 'KMSKS' region motif lies at 240–244; that stretch reads KISKR. Lys-243 lines the ATP pocket.

The protein belongs to the class-I aminoacyl-tRNA synthetase family. Glutamate--tRNA ligase type 1 subfamily. Monomer.

It localises to the cytoplasm. The enzyme catalyses tRNA(Glu) + L-glutamate + ATP = L-glutamyl-tRNA(Glu) + AMP + diphosphate. Its function is as follows. Catalyzes the attachment of glutamate to tRNA(Glu) in a two-step reaction: glutamate is first activated by ATP to form Glu-AMP and then transferred to the acceptor end of tRNA(Glu). The polypeptide is Glutamate--tRNA ligase 1 (Rickettsia bellii (strain OSU 85-389)).